The primary structure comprises 221 residues: Nucleolar protein 3 (221 aa).

Gly2 carries N-myristoyl glycine lipidation. Residues 4-95 (MQERPSETID…MPDPAWDWQH (92 aa)) enclose the CARD domain. The essential for interaction with BAX stretch occupies residues 20 to 70 (VETLQADSGLLLDALVARGVLTGPEYEALDALPDAERRVRRLLLLVQSKGE). Positions 107 to 221 (PPCPGHWTPE…GDESEGCENT (115 aa)) are disordered. The segment covering 132-143 (EEEEIGGPEDSE) has biased composition (acidic residues). Phosphothreonine; by CK2 is present on Thr149. Acidic residues-rich tracts occupy residues 165-201 (PDLEQEMEPEPEPEVEPEPEPEPEPEPEPEPEPEPEP) and 209-221 (FQEGDESEGCENT).

In terms of assembly, oligomerizes (via CARD doamin). Interacts (via CARD domain) with CASP2; inhibits CASP2 activity in a phosphorylation-dependent manner. Interacts with CASP8; decreases CASP8 activity in a mitochondria localization- and phosphorylation-dependent manner and this interaction is dissociated by calcium. Interacts with TFPT; translocates NOL3 into the nucleus and negatively regulated TFPT-induced cell death. Interacts directly (via CARD domain) with FAS and FADD (via DED domain); inhibits death-inducing signaling complex (DISC) assembly by inhibiting the increase in FAS-FADD binding induced by FAS activation. Interacts (via CARD domain) with BAX (via a C-terminal 33 residues); inhibits BAX activation and translocation and consequently cytochrome c release from mitochondria. Interacts with PPM1G; may dephosphorylate NOL3. Interacts (via CARD domain) with BBC3 (via BH3 domain); preventing the association of BBC3 with BCL2 and resulting in activation of CASP8. Interacts (via CARD domain) with BAD(via BH3 domain); preventing the association of BAD with BCL2. Interacts directly (via CARD domain) with TNFRSF1A; inhibits TNF-signaling pathway. In terms of processing, phosphorylation at Thr-149 is required for its antiapoptotic effect by blocking death-inducing signaling complex (DISC) activity through the control of interaction with CASP8. Phosphorylation at Thr-149 results in translocation to mitochondria and this translocation enables the binding to CASP8. Dephosphorylated at Thr-149 by calcineurin; doesn't inhibit the association between FADD and CASP8 and the consequent apoptosis. Post-translationally, polyubiquitinated by MDM2; promoting proteasomal-dependent degradation in response to apoptotic stimuli. As to expression, highly expressed in skeletal muscle, heart and medulla.

The protein resides in the cytoplasm. The protein localises to the mitochondrion. Its subcellular location is the sarcoplasmic reticulum. It is found in the membrane. Apoptosis repressor that blocks multiple modes of cell death. Inhibits extrinsic apoptotic pathways through two different ways. Firstly by interacting with FAS and FADD upon FAS activation blocking death-inducing signaling complex (DISC) assembly. Secondly by interacting with CASP8 in a mitochondria localization- and phosphorylation-dependent manner, limiting the amount of soluble CASP8 available for DISC-mediated activation. Inhibits intrinsic apoptotic pathway in response to a wide range of stresses, through its interaction with BAX resulting in BAX inactivation, preventing mitochondrial dysfunction and release of pro-apoptotic factors. Inhibits calcium-mediated cell death by functioning as a cytosolic calcium buffer, dissociating its interaction with CASP8 and maintaining calcium homeostasis. Negatively regulates oxidative stress-induced apoptosis by phosphorylation-dependent suppression of the mitochondria-mediated intrinsic pathway, by blocking CASP2 activation and BAX translocation. Negatively regulates hypoxia-induced apoptosis in part by inhibiting the release of cytochrome c from mitochondria in a caspase-independent manner. Also inhibits TNF-induced necrosis by preventing TNF-signaling pathway through TNFRSF1A interaction abrogating the recruitment of RIPK1 to complex I. Finally through its role as apoptosis repressor, promotes vascular remodeling through inhibition of apoptosis and stimulation of proliferation, in response to hypoxia. Inhibits too myoblast differentiation through caspase inhibition. The chain is Nucleolar protein 3 (Nol3) from Rattus norvegicus (Rat).